The following is a 442-amino-acid chain: Coiled-coil domain-containing protein 91 (442 aa).

Positions 1 to 16 are GGA1-binding motif; it reads MDDDDFGGFEAAETFD. The interval 1–27 is disordered; that stretch reads MDDDDFGGFEAAETFDGEQGGNQAVSP. Phosphoserine is present on residues serine 43 and serine 46. Residues 48 to 79 are disordered; it reads ELILDHDRSSPSSGHLRSDAVISSPDDTRADS. Coiled coils occupy residues 127-213 and 248-409; these read GVHV…ALSI and CEEL…RLDQ. The interval 211–414 is homodimerization; it reads LSIIVDEYKA…RRLDQVTRQR (204 aa).

Homodimer. Interacts with GGA1, GGA2 and AP1G1.

The protein localises to the membrane. Its subcellular location is the golgi apparatus. The protein resides in the trans-Golgi network membrane. It is found in the trans-Golgi network. In terms of biological role, involved in the regulation of membrane traffic through the trans-Golgi network (TGN). Functions in close cooperation with the GGAs in the sorting of hydrolases to lysosomes. The protein is Coiled-coil domain-containing protein 91 (Ccdc91) of Rattus norvegicus (Rat).